A 179-amino-acid chain; its full sequence is Large ribosomal subunit protein uL5 (179 aa).

It belongs to the universal ribosomal protein uL5 family. In terms of assembly, part of the 50S ribosomal subunit; part of the 5S rRNA/L5/L18/L25 subcomplex. Contacts the 5S rRNA and the P site tRNA. Forms a bridge to the 30S subunit in the 70S ribosome.

Functionally, this is one of the proteins that bind and probably mediate the attachment of the 5S RNA into the large ribosomal subunit, where it forms part of the central protuberance. In the 70S ribosome it contacts protein S13 of the 30S subunit (bridge B1b), connecting the 2 subunits; this bridge is implicated in subunit movement. Contacts the P site tRNA; the 5S rRNA and some of its associated proteins might help stabilize positioning of ribosome-bound tRNAs. The protein is Large ribosomal subunit protein uL5 of Chromohalobacter salexigens (strain ATCC BAA-138 / DSM 3043 / CIP 106854 / NCIMB 13768 / 1H11).